We begin with the raw amino-acid sequence, 370 residues long: 5-hydroxytryptamine receptor 5B (370 aa).

The interval 1–36 (MEVSNLSGATPGLAFPPGPESCSDSPSSGRSMGSTP) is disordered. The Extracellular segment spans residues 1-48 (MEVSNLSGATPGLAFPPGPESCSDSPSSGRSMGSTPGGLILPGREPPF). An N-linked (GlcNAc...) asparagine glycan is attached at Asn-5. Low complexity predominate over residues 20-36 (ESCSDSPSSGRSMGSTP). Residues 49–75 (SAFTVLVVTLLVLLIAATFLWNLLVLV) form a helical membrane-spanning segment. Over 76–88 (TILRVRAFHRVPH) the chain is Cytoplasmic. Residues 89-115 (NLVASTAVSDVLVAVLVMPLSLVSELS) form a helical membrane-spanning segment. At 116 to 127 (AGRRWQLGRSLC) the chain is on the extracellular side. The cysteines at positions 127 and 205 are disulfide-linked. A helical transmembrane segment spans residues 128-150 (HVWISFDVLCCTASIWNVAAIAL). Residue Asp-134 coordinates serotonin. Topologically, residues 151–168 (DRYWTITRHLQYTLRTRS) are cytoplasmic. Residues 169 to 189 (RASALMIAITWALSALIALAP) form a helical membrane-spanning segment. The Extracellular segment spans residues 190 to 211 (LLFGWGEAYDARLQRCQVSQEP). Residues 212-233 (SYAVFSTCGAFYLPLAVVLFVY) traverse the membrane as a helical segment. Residues 234–300 (WKIYKAAKFR…QKEKRAAMMV (67 aa)) lie on the Cytoplasmic side of the membrane. A helical membrane pass occupies residues 301 to 325 (GILIGVFVLCWIPFFLTELISPLCA). Residues 326–327 (CS) are Extracellular-facing. The chain crosses the membrane as a helical span at residues 328–352 (LPPIWKSIFLWLGYSNSFFNPLIYT). At 353 to 370 (AFNKNYNNAFKSLFTKQR) the chain is on the cytoplasmic side.

The protein belongs to the G-protein coupled receptor 1 family. Expressed predominantly in the central nervous system; in the hippocampus, habenula, and the doral raphe.

The protein resides in the cell membrane. Functionally, G-protein coupled receptor for 5-hydroxytryptamine (serotonin), a biogenic hormone that functions as a neurotransmitter, a hormone and a mitogen. Also functions as a receptor for ergot alkaloid derivatives and other psychoactive substances. Ligand binding causes a conformation change that triggers signaling via guanine nucleotide-binding proteins (G proteins) and modulates the activity of downstream effectors. Htr5b is coupled to G(i)/G(o) G alpha proteins and mediates inhibitory neurotransmission: signaling inhibits adenylate cyclase activity and activates a phosphatidylinositol-calcium second messenger system that regulates the release of Ca(2+) ions from intracellular stores. In Mus musculus (Mouse), this protein is 5-hydroxytryptamine receptor 5B.